The sequence spans 98 residues: Flagellar hook-basal body complex protein FliE (98 aa).

The protein belongs to the FliE family.

It localises to the bacterial flagellum basal body. The chain is Flagellar hook-basal body complex protein FliE from Listeria monocytogenes serovar 1/2a (strain ATCC BAA-679 / EGD-e).